We begin with the raw amino-acid sequence, 133 residues long: UPF0225 protein BB3385 (133 aa).

This sequence belongs to the UPF0225 family.

The protein is UPF0225 protein BB3385 of Bordetella bronchiseptica (strain ATCC BAA-588 / NCTC 13252 / RB50) (Alcaligenes bronchisepticus).